We begin with the raw amino-acid sequence, 89 residues long: Small ribosomal subunit protein uS15 (89 aa).

This sequence belongs to the universal ribosomal protein uS15 family. Part of the 30S ribosomal subunit. Forms a bridge to the 50S subunit in the 70S ribosome, contacting the 23S rRNA.

Functionally, one of the primary rRNA binding proteins, it binds directly to 16S rRNA where it helps nucleate assembly of the platform of the 30S subunit by binding and bridging several RNA helices of the 16S rRNA. In terms of biological role, forms an intersubunit bridge (bridge B4) with the 23S rRNA of the 50S subunit in the ribosome. The polypeptide is Small ribosomal subunit protein uS15 (Edwardsiella ictaluri (strain 93-146)).